We begin with the raw amino-acid sequence, 301 residues long: Probable alpha-L-glutamate ligase (301 aa).

The ATP-grasp domain maps to 104–287 (LQILARKGIG…VAGKIIEYLE (184 aa)). Residues lysine 141, 178–179 (EY), aspartate 187, and 211–213 (RSN) contribute to the ATP site. Aspartate 248, glutamate 260, and asparagine 262 together coordinate Mg(2+). The Mn(2+) site is built by aspartate 248, glutamate 260, and asparagine 262.

The protein belongs to the RimK family. The cofactor is Mg(2+). It depends on Mn(2+) as a cofactor.

The protein is Probable alpha-L-glutamate ligase of Picosynechococcus sp. (strain ATCC 27264 / PCC 7002 / PR-6) (Agmenellum quadruplicatum).